A 345-amino-acid chain; its full sequence is Fructose-1,6-bisphosphatase class 1 (345 aa).

Mg(2+)-binding residues include Glu90, Asp109, Leu111, and Asp112. Residues 112–115 (DGSS) and Asn199 contribute to the substrate site. Position 271 (Glu271) interacts with Mg(2+).

It belongs to the FBPase class 1 family. Homotetramer. It depends on Mg(2+) as a cofactor.

The protein localises to the cytoplasm. The enzyme catalyses beta-D-fructose 1,6-bisphosphate + H2O = beta-D-fructose 6-phosphate + phosphate. It functions in the pathway carbohydrate biosynthesis; Calvin cycle. This Rhodopseudomonas palustris (strain BisB5) protein is Fructose-1,6-bisphosphatase class 1.